The following is a 411-amino-acid chain: Lissencephaly-1 homolog (411 aa).

Residues 9 to 41 (QREELNQAIADYLGSNGYSSALEAFRKEADISG) enclose the LisH domain. The stretch at 56 to 83 (TSVIRLQKKVMELEAKLSEAEKEVIEGA) forms a coiled coil. WD repeat units follow at residues 106-147 (GHRA…RSLK), 149-187 (HTSS…DCVK), 191-230 (GHDH…CVKT), 233-272 (GHRE…CKAE), 275-334 (AHDH…CLFV), 337-376 (GHDN…FMKT), and 379-411 (AHQH…WECR).

The protein belongs to the WD repeat LIS1/nudF family.

It is found in the cytoplasm. It localises to the cytoskeleton. The protein resides in the microtubule organizing center. The protein localises to the centrosome. In terms of biological role, positively regulates the activity of the minus-end directed microtubule motor protein dynein. May enhance dynein-mediated microtubule sliding by targeting dynein to the microtubule plus end. Required for several dynein- and microtubule-dependent processes. This Glossina morsitans morsitans (Savannah tsetse fly) protein is Lissencephaly-1 homolog.